A 342-amino-acid chain; its full sequence is Dihydroorotate dehydrogenase (quinone) (342 aa).

FMN contacts are provided by residues 65–69 and threonine 89; that span reads AGLDK. Lysine 69 lines the substrate pocket. Position 114-118 (114-118) interacts with substrate; that stretch reads NRMGF. Residues asparagine 142 and asparagine 175 each coordinate FMN. Residue asparagine 175 coordinates substrate. Catalysis depends on serine 178, which acts as the Nucleophile. Asparagine 180 is a binding site for substrate. 2 residues coordinate FMN: lysine 220 and threonine 248. 249–250 serves as a coordination point for substrate; that stretch reads NT. Residues glycine 271, glycine 300, and 321-322 each bind FMN; that span reads YT.

It belongs to the dihydroorotate dehydrogenase family. Type 2 subfamily. In terms of assembly, monomer. Requires FMN as cofactor.

The protein localises to the cell membrane. It carries out the reaction (S)-dihydroorotate + a quinone = orotate + a quinol. Its pathway is pyrimidine metabolism; UMP biosynthesis via de novo pathway; orotate from (S)-dihydroorotate (quinone route): step 1/1. Catalyzes the conversion of dihydroorotate to orotate with quinone as electron acceptor. The sequence is that of Dihydroorotate dehydrogenase (quinone) from Burkholderia pseudomallei (strain 668).